Consider the following 523-residue polypeptide: MSTDHIRRPIRRALISVYDKTGLVDLAQGLTAAGVEIVSTGSTAKTIASKGIPVTRVEELTGFPEVLDGRVKTLHPRVHAGLLADLRNPEHEAALAELGVEAFELVVVNLYPFSQTVESGASVDECVEQIDIGGPSMVRAAAKNHPSVAVVTDPQGYDGVLAAVRSGGFTFAERKKLASLAFQHTAEYDIAVASWMQSTVAPEQPETDFPRWFGRNWRRQAMLRYGENPHQQAALYADPGAWPGLAQAEQLHGKEMSYNNFTDADAAWRAAFDHEQKCVAIIKHANPCGIAISEVSVADAHRKAHACDPLSAYGGVIACNTEVSPEMAEYVSTIFTEVIVAPAYAPAALDQLTKKKNIRVLVASEPQDGGAELRPISGGLLMQQRDQLDAAGDNPANWILATGSPADPATLTDLVFAWRSCRAVKSNAIVIVADGATIGVGMGQVNRVDAARLAVERGGERVNGAVAASDAFFPFPDGLETLTAAGVKAIVHPGGSVRDEEVTAAAAKAGITLYLTGSRHFVH.

An MGS-like domain is found at 4–152; it reads DHIRRPIRRA…KNHPSVAVVT (149 aa).

The protein belongs to the PurH family.

It carries out the reaction (6R)-10-formyltetrahydrofolate + 5-amino-1-(5-phospho-beta-D-ribosyl)imidazole-4-carboxamide = 5-formamido-1-(5-phospho-D-ribosyl)imidazole-4-carboxamide + (6S)-5,6,7,8-tetrahydrofolate. The catalysed reaction is IMP + H2O = 5-formamido-1-(5-phospho-D-ribosyl)imidazole-4-carboxamide. Its pathway is purine metabolism; IMP biosynthesis via de novo pathway; 5-formamido-1-(5-phospho-D-ribosyl)imidazole-4-carboxamide from 5-amino-1-(5-phospho-D-ribosyl)imidazole-4-carboxamide (10-formyl THF route): step 1/1. The protein operates within purine metabolism; IMP biosynthesis via de novo pathway; IMP from 5-formamido-1-(5-phospho-D-ribosyl)imidazole-4-carboxamide: step 1/1. The protein is Bifunctional purine biosynthesis protein PurH of Mycobacterium ulcerans (strain Agy99).